A 62-amino-acid chain; its full sequence is Alpha-toxin Tf4 (62 aa).

The LCN-type CS-alpha/beta domain maps to 2-62 (KEGYPADSKG…SVWDSATNKC (61 aa)). 4 disulfides stabilise this stretch: Cys-12–Cys-62, Cys-16–Cys-38, Cys-24–Cys-43, and Cys-28–Cys-45. Position 62 is a cysteine amide (Cys-62).

In terms of tissue distribution, expressed by the venom gland.

It is found in the secreted. Functionally, alpha toxins bind voltage-independently at site-3 of sodium channels (Nav) and inhibit the inactivation of the activated channels, thereby blocking neuronal transmission. This toxin is toxic to frogs but non-toxic to insect larvae (T.molitor), mammals (rats) and crustaceans (crabs) at the doses assayed. In Tityus fasciolatus (Central Brazilian scorpion), this protein is Alpha-toxin Tf4.